Consider the following 357-residue polypeptide: Large ribosomal subunit protein mL45 (357 aa).

Positions 333 to 357 (EAKALPLRTTEKLEEAKKEKEQQEI) are disordered. Basic and acidic residues predominate over residues 341-357 (TTEKLEEAKKEKEQQEI).

Belongs to the mitochondrion-specific ribosomal protein mL45 family.

The protein localises to the mitochondrion. In Caenorhabditis elegans, this protein is Large ribosomal subunit protein mL45 (mrpl-45).